A 419-amino-acid polypeptide reads, in one-letter code: Satellite RNA 48 kDa protein (419 aa).

Basic residues predominate over residues Met1–Pro27. The segment at Met1–Gly66 is disordered.

Belongs to the nepovirus satellite RNA 48 kDa protein family.

The polypeptide is Satellite RNA 48 kDa protein (Allium porrum (Leek)).